The chain runs to 601 residues: MSISIRKKNFCIIAHIDHGKSTLADRFIQKAKIISDRDFKSQMLDSMEIERERGITIKSQAVTITYKSNDGDFYELNFVDTPGHVDFSYEVSRAISSCEGALLLIDASQGIQAQTVSNFYMAFEHDLEIIPVINKIDLPNANVDFIKKQIKNDLGLNDELAISISAKNGIGIDDLLEAICKYVPSPKGSIKDPLRALIFDSHYDSYRGVVVHFRIFEGQIKTGDKIRLMHTNSDYLIEEIGVFKILLERKDRLEAGDVGYFIAGIKNISDVKIGDTVTLCDCPALSPLEGFKEVKPVVFSSVYPVDANQYDDLLRAMDRLKLNDASLTFEKDSSSALGHGFKCGFLGLLHLEVIQERIEREFDLNVILTSPSVRYKIIPKKGKSYFIESPEQFPGNEAIESVLEPYIRANIIVPTEFLGNIMSVCLLKRGVQTNLIYLNTKRVELIYKMPLAEILFDFYDKIKSVSRGYASFDYELLDYEYTDLVRLDILVNGDRVDALSQLVFKDSARTKAVGICKKLKDEIARQQFKIAIQGAIGSNVIARETISPVRKDVTAKCYGGDITRKRKLLEKQKEGKKRMKMVGNVEIPQSVFLSVLKSNDN.

A tr-type G domain is found at 5–187 (IRKKNFCIIA…AICKYVPSPK (183 aa)). GTP contacts are provided by residues 17 to 22 (DHGKST) and 134 to 137 (NKID).

The protein belongs to the TRAFAC class translation factor GTPase superfamily. Classic translation factor GTPase family. LepA subfamily.

It is found in the cell inner membrane. It catalyses the reaction GTP + H2O = GDP + phosphate + H(+). Functionally, required for accurate and efficient protein synthesis under certain stress conditions. May act as a fidelity factor of the translation reaction, by catalyzing a one-codon backward translocation of tRNAs on improperly translocated ribosomes. Back-translocation proceeds from a post-translocation (POST) complex to a pre-translocation (PRE) complex, thus giving elongation factor G a second chance to translocate the tRNAs correctly. Binds to ribosomes in a GTP-dependent manner. This chain is Elongation factor 4, found in Borreliella afzelii (strain PKo) (Borrelia afzelii).